We begin with the raw amino-acid sequence, 658 residues long: Threonine--tRNA ligase (658 aa).

The TGS domain occupies 1-61 (MSDVRVTVQR…AAGDVVEPIT (61 aa)). Residues 259-554 (DHRRLGAELD…LLEHYAGALP (296 aa)) form a catalytic region. Zn(2+) contacts are provided by Cys353, His404, and His531.

The protein belongs to the class-II aminoacyl-tRNA synthetase family. In terms of assembly, homodimer. Requires Zn(2+) as cofactor.

It is found in the cytoplasm. It carries out the reaction tRNA(Thr) + L-threonine + ATP = L-threonyl-tRNA(Thr) + AMP + diphosphate + H(+). Its function is as follows. Catalyzes the attachment of threonine to tRNA(Thr) in a two-step reaction: L-threonine is first activated by ATP to form Thr-AMP and then transferred to the acceptor end of tRNA(Thr). Also edits incorrectly charged L-seryl-tRNA(Thr). The sequence is that of Threonine--tRNA ligase from Parafrankia sp. (strain EAN1pec).